The chain runs to 386 residues: Tumor necrosis factor receptor superfamily member 10D (386 aa).

Disordered regions lie at residues Met-1–Ala-25 and Asp-62–Ser-90. Positions Met-1–Ser-55 are cleaved as a signal peptide. The Extracellular portion of the chain corresponds to Ala-56–His-211. TNFR-Cys repeat units follow at residues Ile-58–Asn-97, Pro-98–Cys-139, and Gln-140–Cys-180. Polar residues predominate over residues Val-64–Arg-75. Disulfide bonds link Cys-83/Cys-96, Cys-99/Cys-115, Cys-118/Cys-131, Cys-121/Cys-139, Cys-141/Cys-155, Cys-158/Cys-172, and Cys-162/Cys-180. Asn-127 is a glycosylation site (N-linked (GlcNAc...) asparagine). An N-linked (GlcNAc...) asparagine glycan is attached at Asn-182. A helical membrane pass occupies residues Tyr-212 to Cys-232. Topologically, residues Arg-233–Leu-386 are cytoplasmic. Residues Ser-340–Leu-366 enclose the Death; truncated domain.

In terms of tissue distribution, widely expressed, in particular in fetal kidney, lung and liver, and in adult testis and liver. Also expressed in peripheral blood leukocytes, colon and small intestine, ovary, prostate, thymus, spleen, pancreas, kidney, lung, placenta and heart.

The protein localises to the membrane. Its function is as follows. Receptor for the cytotoxic ligand TRAIL. Contains a truncated death domain and hence is not capable of inducing apoptosis but protects against TRAIL-mediated apoptosis. Reports are contradictory with regards to its ability to induce the NF-kappa-B pathway. According to PubMed:9382840, it cannot but according to PubMed:9430226, it can induce the NF-kappa-B pathway. The sequence is that of Tumor necrosis factor receptor superfamily member 10D from Homo sapiens (Human).